Consider the following 535-residue polypeptide: PAC-1 interacting and coiled-coil domain-containing protein 1 (535 aa).

The segment at 1–67 (MIITTPRRAN…KQTPPRSPVI (67 aa)) is disordered. A compositionally biased stretch (low complexity) spans 36–57 (SSTTPSSIGSSSSSSSSYASST). 2 coiled-coil regions span residues 109–172 (KLQY…RDLS) and 198–242 (SLMK…RQSL). Disordered regions lie at residues 254-277 (NESE…NDEE) and 503-535 (TCRP…HTHN). Residues 503–525 (TCRPTTTLISSTQPAQRSVSVEK) show a composition bias toward polar residues. Residues 526-535 (NNNNNVHTHN) are compositionally biased toward low complexity.

It belongs to the CCDC85 family. Interacts with pac-1 and jac-1.

The protein resides in the cell junction. Its subcellular location is the adherens junction. In terms of biological role, linker protein which helps to recruit the Rho GTPase-activating protein, pac-1, to adherens junctions. In Caenorhabditis elegans, this protein is PAC-1 interacting and coiled-coil domain-containing protein 1.